The sequence spans 971 residues: MATVRASLRGALLLLLAVAGVAEVAGGLAPGSAGALCCNHSKDNQMCRDVCEQIFSSKSESRLKHLLQRAPDYCPETMVEIWNCMNSSLPGVFKKSDGWVGLGCCELAIALECRQACKQASSKNDISKVCRKEYENALFSCISRNEMGSVCCSYAGHHTNCREYCQAIFRTDSSPGPSQIKAVENYCASISPQLIHCVNNYTQSYPMRNPTDSLYCCDRAEDHACQNACKRILMSKKTEMEIVDGLIEGCKTQPLPQDPLWQCFLESSQSVHPGVTVHPPPSTGLDGAKLHCCSKANTSTCRELCTKLYSMSWGNTQSWQEFDRFCEYNPVEVSMLTCLADVREPCQLGCRNLTYCTNFNNRPTELFRSCNAQSDQGAMNDMKLWEKGSIKMPFINIPVLDIKKCQPEMWKAIACSLQIKPCHSKSRGSIICKSDCVEILKKCGDQNKFPEDHTAESICELLSPTDDLKNCIPLDTYLRPSTLGNIVEEVTHPCNPNPCPANELCEVNRKGCPSGDPCLPYFCVQGCKLGEASDFIVRQGTLIQVPSSAGEVGCYKICSCGQSGLLENCMEMHCIDLQKSCIVGGKRKSHGTSFSIDCNVCSCFAGNLVCSTRLCLSEHSSEDDRRTFTGLPCNCADQFVPVCGQNGRTYPSACIARCVGLQDHQFEFGSCMSKDPCNPNPCQKNQRCIPKPQVCLTTFDKFGCSQYECVPRQLACDQVQDPVCDTDHMEHNNLCTLYQRGKSLSYKGPCQPFCRATEPVCGHNGETYSSVCAAYSDRVAVDYYGDCQAVGVLSEHSSVAECASVKCPSLLAAGCKPIIPPGACCPLCAGMLRVLFDKEKLDTIAKVTNKKPITVLEILQKIRMHVSVPQCDVFGYFSIESEIVILIIPVDHYPKALQIEACNKEAEKIESLINSDSPTLASHVPLSALIISQVQVSSSVPSAGVRARPSCHSLLLPLSLGLALHLLWTYN.

The signal sequence occupies residues 1–22 (MATVRASLRGALLLLLAVAGVA). The Knot 1 repeat unit spans residues 37–84 (CCNHSKDNQMCRDVCEQIFSSKSESRLKHLLQRAPDYCPETMVEIWNC). Residues 37–338 (CCNHSKDNQM…NPVEVSMLTC (302 aa)) are 5 X Knot repeats. Residues Asn39 and Asn86 are each glycosylated (N-linked (GlcNAc...) asparagine). 2 Knot repeats span residues 104-141 (CCEL…LFSC) and 151-197 (CCSY…LIHC). Residue Asn200 is glycosylated (N-linked (GlcNAc...) asparagine). Knot repeat units follow at residues 216 to 263 (CCDR…LWQC) and 292 to 338 (CCSK…MLTC). Asn297 and Asn352 each carry an N-linked (GlcNAc...) asparagine glycan. Kazal-like domains follow at residues 627–673 (TFTG…SCMS), 698–752 (TFDK…PCQP), and 753–789 (FCRA…DCQA). Disulfide bonds link Cys633-Cys658, Cys635-Cys654, Cys643-Cys671, Cys716-Cys735, Cys724-Cys750, and Cys761-Cys787. Residue Ser942 is the site of GPI-anchor amidated serine attachment. Residues 943 to 971 (AGVRARPSCHSLLLPLSLGLALHLLWTYN) constitute a propeptide, removed in mature form.

The protein belongs to the RECK family. As to quaternary structure, interacts (via knot repeats) with WNT7A (via disordered linker region); the interaction is direct. Interacts (via knot repeats) with WNT7B (via disordered linker region); the interaction is direct. Interacts with ADGRA2; the interaction is direct. Interacts with MMP9. Post-translationally, N-glycosylated. Expressed in various tissues and untransformed cells. It is undetectable in tumor-derived cell lines and oncogenically transformed cells.

Its subcellular location is the cell membrane. Functions together with ADGRA2 to enable brain endothelial cells to selectively respond to Wnt7 signals (WNT7A or WNT7B). Plays a key role in Wnt7-specific responses: required for central nervous system (CNS) angiogenesis and blood-brain barrier regulation. Acts as a Wnt7-specific coactivator of canonical Wnt signaling by decoding Wnt ligands: acts by interacting specifically with the disordered linker region of Wnt7, thereby conferring ligand selectivity for Wnt7. ADGRA2 is then required to deliver RECK-bound Wnt7 to frizzled by assembling a higher-order RECK-ADGRA2-Fzd-LRP5-LRP6 complex. Also acts as a serine protease inhibitor: negatively regulates matrix metalloproteinase-9 (MMP9) by suppressing MMP9 secretion and by direct inhibition of its enzymatic activity. Also inhibits metalloproteinase activity of MMP2 and MMP14 (MT1-MMP). This Homo sapiens (Human) protein is Reversion-inducing cysteine-rich protein with Kazal motifs.